The following is an 89-amino-acid chain: NADH-ubiquinone oxidoreductase chain 4L (89 aa).

A run of 3 helical transmembrane segments spans residues 1–21 (MNLSLILFLIGILGFVLNRKN), 22–42 (IILMLISIEIILLSVTFLILI), and 55–75 (FAIYIITIAGAESAIGLGILV).

This sequence belongs to the complex I subunit 4L family.

Its subcellular location is the mitochondrion membrane. The enzyme catalyses a ubiquinone + NADH + 5 H(+)(in) = a ubiquinol + NAD(+) + 4 H(+)(out). Its function is as follows. Core subunit of the mitochondrial membrane respiratory chain NADH dehydrogenase (Complex I) that is believed to belong to the minimal assembly required for catalysis. Complex I functions in the transfer of electrons from NADH to the respiratory chain. The immediate electron acceptor for the enzyme is believed to be ubiquinone. This Trichophyton rubrum (Athlete's foot fungus) protein is NADH-ubiquinone oxidoreductase chain 4L (ND4L).